Reading from the N-terminus, the 416-residue chain is Glutamyl-tRNA reductase 1 (416 aa).

Substrate is bound by residues 57–60 (TCNR), S113, 118–120 (DFE), and Q124. The active-site Nucleophile is the C58. 193-198 (GTGKIG) is an NADP(+) binding site.

It belongs to the glutamyl-tRNA reductase family. As to quaternary structure, homodimer.

It catalyses the reaction (S)-4-amino-5-oxopentanoate + tRNA(Glu) + NADP(+) = L-glutamyl-tRNA(Glu) + NADPH + H(+). It functions in the pathway porphyrin-containing compound metabolism; protoporphyrin-IX biosynthesis; 5-aminolevulinate from L-glutamyl-tRNA(Glu): step 1/2. In terms of biological role, catalyzes the NADPH-dependent reduction of glutamyl-tRNA(Glu) to glutamate 1-semialdehyde (GSA). The chain is Glutamyl-tRNA reductase 1 from Flavobacterium johnsoniae (strain ATCC 17061 / DSM 2064 / JCM 8514 / BCRC 14874 / CCUG 350202 / NBRC 14942 / NCIMB 11054 / UW101) (Cytophaga johnsonae).